Consider the following 694-residue polypeptide: Elongation factor G (694 aa).

The tr-type G domain maps to 8 to 287; that stretch reads EDYRNFGIMA…AVVEFLPAPT (280 aa). GTP is bound by residues 17–24, 86–90, and 140–143; these read AHIDAGKT, DTPGH, and NKMD.

Belongs to the TRAFAC class translation factor GTPase superfamily. Classic translation factor GTPase family. EF-G/EF-2 subfamily.

It is found in the cytoplasm. Catalyzes the GTP-dependent ribosomal translocation step during translation elongation. During this step, the ribosome changes from the pre-translocational (PRE) to the post-translocational (POST) state as the newly formed A-site-bound peptidyl-tRNA and P-site-bound deacylated tRNA move to the P and E sites, respectively. Catalyzes the coordinated movement of the two tRNA molecules, the mRNA and conformational changes in the ribosome. The protein is Elongation factor G of Brucella anthropi (strain ATCC 49188 / DSM 6882 / CCUG 24695 / JCM 21032 / LMG 3331 / NBRC 15819 / NCTC 12168 / Alc 37) (Ochrobactrum anthropi).